Here is a 296-residue protein sequence, read N- to C-terminus: Tyrosine recombinase XerC (296 aa).

The Core-binding (CB) domain maps to 1-84 (MEKIQQAYLY…TLRSFYEYWM (84 aa)). The Tyr recombinase domain maps to 105–286 (YLPHFFYEEE…TNEQLRKVYL (182 aa)). Residues Arg145, Lys169, His238, Arg241, and His264 contribute to the active site. The active-site O-(3'-phospho-DNA)-tyrosine intermediate is the Tyr273.

This sequence belongs to the 'phage' integrase family. XerC subfamily. As to quaternary structure, forms a cyclic heterotetrameric complex composed of two molecules of XerC and two molecules of XerD.

Its subcellular location is the cytoplasm. Site-specific tyrosine recombinase, which acts by catalyzing the cutting and rejoining of the recombining DNA molecules. The XerC-XerD complex is essential to convert dimers of the bacterial chromosome into monomers to permit their segregation at cell division. It also contributes to the segregational stability of plasmids. The polypeptide is Tyrosine recombinase XerC (Staphylococcus saprophyticus subsp. saprophyticus (strain ATCC 15305 / DSM 20229 / NCIMB 8711 / NCTC 7292 / S-41)).